The chain runs to 734 residues: Methylcrotonoyl-CoA carboxylase subunit alpha, mitochondrial (734 aa).

A mitochondrion-targeting transit peptide spans 1–25; sequence MSMMTVWALRRNVRRKNHSMLVRYI. The 448-residue stretch at 37–484 folds into the Biotin carboxylation domain; the sequence is CIEKILVANR…ETHFIEHHKS (448 aa). 3 residues coordinate ATP: Lys-152, Glu-236, and His-271. The region spanning 156–354 is the ATP-grasp domain; sequence KRIMGAAGVP…LVEWQIRVAN (199 aa). Residues Glu-311, Glu-325, and Asn-327 each contribute to the Mn(2+) site. The active site involves Arg-329. Ser-645 is subject to Phosphoserine. Residues 645–666 form a disordered region; that stretch reads SEDEEGVQHRTSSETSSHPPGT. One can recognise a Biotinyl-binding domain in the interval 657-733; sequence SETSSHPPGT…SDGSALFRIK (77 aa). Residue Lys-699 is modified to N6-biotinyllysine.

As to quaternary structure, probably a heterodimer composed of biotin-containing alpha subunits and beta subunits. Requires biotin as cofactor. Mn(2+) serves as cofactor. As to expression, in roots, cotyledons, leaves, flowers, ovaries, siliques and embryos.

It is found in the mitochondrion matrix. It carries out the reaction 3-methylbut-2-enoyl-CoA + hydrogencarbonate + ATP = 3-methyl-(2E)-glutaconyl-CoA + ADP + phosphate + H(+). It participates in amino-acid degradation; L-leucine degradation; (S)-3-hydroxy-3-methylglutaryl-CoA from 3-isovaleryl-CoA: step 2/3. Its function is as follows. Biotin-attachment subunit of the 3-methylcrotonyl-CoA carboxylase, an enzyme that catalyzes the conversion of 3-methylcrotonyl-CoA to 3-methylglutaconyl-CoA, a critical step for leucine and isovaleric acid catabolism. In Arabidopsis thaliana (Mouse-ear cress), this protein is Methylcrotonoyl-CoA carboxylase subunit alpha, mitochondrial (MCCA).